The following is a 47-amino-acid chain: Putative heat shock protein HSP90 (47 aa).

Residue Arg47 coordinates ATP.

It belongs to the heat shock protein 90 family. In terms of assembly, homodimer.

The protein resides in the cytoplasm. Its function is as follows. Putative molecular chaperone that may promote the maturation, structural maintenance and proper regulation of specific target proteins. This chain is Putative heat shock protein HSP90, found in Populus euphratica (Euphrates poplar).